We begin with the raw amino-acid sequence, 119 residues long: Putative membrane protein insertion efficiency factor (119 aa).

Belongs to the UPF0161 family.

The protein localises to the cell inner membrane. Its function is as follows. Could be involved in insertion of integral membrane proteins into the membrane. The chain is Putative membrane protein insertion efficiency factor from Brucella anthropi (strain ATCC 49188 / DSM 6882 / CCUG 24695 / JCM 21032 / LMG 3331 / NBRC 15819 / NCTC 12168 / Alc 37) (Ochrobactrum anthropi).